A 116-amino-acid chain; its full sequence is Bacterial microcompartment shell protein CutR (116 aa).

The 99-residue stretch at 10–108 folds into the BMC circularly permuted domain; the sequence is RIIQESVPGK…LEYFKNSLGF (99 aa).

The protein belongs to the EutS/PduU family. Has been crystallized in 5 structures (all are mutated, 3 have an N-terminal His-tag), most are homohexameric with a central pore. In two the homohexamer lies flat with a beta-barrel on the flat face created by the protruding N termini of the six chains. In 2 others the hexamer is not flat but has a six-fold screw axis; the screw pitch is 33.8 or 41.9 Angstroms depending on the structure. Interacts with the BMC major shell protein.

Its subcellular location is the bacterial microcompartment. It participates in amine and polyamine metabolism; choline degradation. Functionally, a minor shell protein of the choline degradation-specific bacterial microcompartment (BMC). Proteins such as this one with circularly permuted BMC domains may play a key role in conferring heterogeneity and flexibility in this BMC. The sequence is that of Bacterial microcompartment shell protein CutR from Streptococcus intermedius (strain ATCC 27335 / DSM 20573 / CCUG 32759 / CIP 103248 / JCM 12996 / LMG 17840 / NCTC 11324 / SK54 / 1877).